Consider the following 457-residue polypeptide: Flavin-containing monooxygenase FMO GS-OX2 (457 aa).

17–22 serves as a coordination point for FAD; it reads GAGAAG. Residue 211–216 participates in NADP(+) binding; the sequence is GNFASG.

It belongs to the FMO family.

The enzyme catalyses a (Z)-omega-(methylsulfanyl)-N-sulfo-alkylhydroximate S-glucoside + NADPH + O2 + H(+) = a (Z)-omega-(methylsulfinyl)-alkyl-glucosinolate + NADP(+) + H2O. Its function is as follows. Catalyzes the conversion of methylthioalkyl glucosinolates of any chain length into methylsulfinylalkyl glucosinolates. In Arabidopsis thaliana (Mouse-ear cress), this protein is Flavin-containing monooxygenase FMO GS-OX2 (FMOGS-OX2).